Reading from the N-terminus, the 207-residue chain is Ras-related protein Rab-7a (207 aa).

The residue at position 2 (Thr-2) is an N-acetylthreonine. GTP contacts are provided by Ser-17, Gly-18, Val-19, Gly-20, Lys-21, Thr-22, Ser-23, Ser-34, Asn-35, Tyr-37, and Thr-40. Thr-22 serves as a coordination point for Mg(2+). The Switch 1 motif lies at 28–41; the sequence is YVNKKFSNQYKATI. Residues Thr-40 and Asp-63 each coordinate Mg(2+). Gly-66 contacts GTP. Positions 67-82 match the Switch 2 motif; sequence QERFQSLGVAFYRGAD. Position 72 is a phosphoserine (Ser-72). Positions 125, 126, 128, 156, and 157 each coordinate GTP. Glycyl lysine isopeptide (Lys-Gly) (interchain with G-Cter in ubiquitin) cross-links involve residues Lys-191 and Lys-194. Residues Cys-205 and Cys-207 are each lipidated (S-geranylgeranyl cysteine). The residue at position 207 (Cys-207) is a Cysteine methyl ester.

This sequence belongs to the small GTPase superfamily. Rab family. Interacts with NTRK1/TRKA. Interacts with RILP. Interacts with PSMA7. Interacts with RNF115. Interacts with FYCO1. Interacts with the PIK3C3/VPS34-PIK3R4 complex. The GTP-bound form interacts with OSBPL1A. The GTP-bound form interacts with RAC1. Interacts with CLN3. Interacts with CHM, the substrate-binding subunit of the Rab geranylgeranyltransferase complex. Interacts with C9orf72. Does not interact with HPS4 and the BLOC-3 complex (heterodimer of HPS1 and HPS4). Interacts with CLN5. Interacts with PLEKHM1 (via N- and C-terminus). Interacts with PRPH; the interaction is direct. Interacts with VPS13A. The GDP-bound form interacts with RIMOC1. Interacts with the MON1A-CCZ1B complex and this interaction is enhanced in the presence of RIMOC1. Interacts with VPS39 and VPS41. Forms a ternary complex with LAMP2 and RUFY4; the interaction with LAMP2 is mediated by RUFY4 (via RUN and coiled coil domains). Mg(2+) serves as cofactor. In terms of processing, deubiquitination at Lys-191 and Lys-194 by USP32. Phosphorylated at Ser-72 by LRRK1; phosphorylation is dependent on protein kinase C (PKC) activation of LRRK1. Post-translationally, prenylated. Prenylation is required for association with cellular membranes.

It localises to the cytoplasmic vesicle. Its subcellular location is the phagosome membrane. The protein localises to the late endosome membrane. It is found in the lysosome membrane. The protein resides in the melanosome membrane. It localises to the autophagosome membrane. Its subcellular location is the lipid droplet. The protein localises to the endosome membrane. It is found in the mitochondrion membrane. The catalysed reaction is GTP + H2O = GDP + phosphate + H(+). Regulated by guanine nucleotide exchange factors (GEFs) which promote the exchange of bound GDP for free GTP. Regulated by GTPase activating proteins (GAPs) which increase the GTP hydrolysis activity. Inhibited by GDP dissociation inhibitors (GDIs). The small GTPases Rab are key regulators of intracellular membrane trafficking, from the formation of transport vesicles to their fusion with membranes. Rabs cycle between an inactive GDP-bound form and an active GTP-bound form that is able to recruit to membranes different sets of downstream effectors directly responsible for vesicle formation, movement, tethering and fusion. In its active state, RAB7A binds to a variety of effector proteins playing a key role in the regulation of endo-lysosomal trafficking. Governs early-to-late endosomal maturation, microtubule minus-end as well as plus-end directed endosomal migration and positioning, and endosome-lysosome transport through different protein-protein interaction cascades. Also plays a central role in growth-factor-mediated cell signaling, nutrient-transporter-mediated nutrient uptake, neurotrophin transport in the axons of neurons and lipid metabolism. Also involved in regulation of some specialized endosomal membrane trafficking, such as maturation of melanosomes, pathogen-induced phagosomes (or vacuoles) and autophagosomes. Plays a role in the maturation and acidification of phagosomes that engulf pathogens, such as S.aureus and Mycobacteria. Plays a role in the fusion of phagosomes with lysosomes. In concert with RAC1, plays a role in regulating the formation of RBs (ruffled borders) in osteoclasts. Controls the endosomal trafficking and neurite outgrowth signaling of NTRK1/TRKA. Regulates the endocytic trafficking of the EGF-EGFR complex by regulating its lysosomal degradation. Involved in the ADRB2-stimulated lipolysis through lipophagy, a cytosolic lipase-independent autophagic pathway. Required for the exosomal release of SDCBP, CD63 and syndecan. Required for vesicular trafficking and cell surface expression of ACE2. May play a role in PRPH neuronal intermediate filament assembly. The protein is Ras-related protein Rab-7a (RAB7A) of Canis lupus familiaris (Dog).